The primary structure comprises 119 residues: Small ribosomal subunit protein uS13 (119 aa).

Residues 92–110 (RKDTCKRSTKKNARTRKGP) show a composition bias toward basic residues. The segment at 92–119 (RKDTCKRSTKKNARTRKGPKKDNRWKER) is disordered.

This sequence belongs to the universal ribosomal protein uS13 family. Part of the 30S ribosomal subunit. Forms a loose heterodimer with protein S19. Forms two bridges to the 50S subunit in the 70S ribosome.

Functionally, located at the top of the head of the 30S subunit, it contacts several helices of the 16S rRNA. In the 70S ribosome it contacts the 23S rRNA (bridge B1a) and protein L5 of the 50S subunit (bridge B1b), connecting the 2 subunits; these bridges are implicated in subunit movement. Contacts the tRNAs in the A and P-sites. This Mycoplasma sp protein is Small ribosomal subunit protein uS13.